The sequence spans 249 residues: Metal-staphylopine import system ATP-binding protein CntF (249 aa).

The ABC transporter domain occupies 2-244 (IKVTDVEKSY…DNAYTRELIE (243 aa)). Residue 42–49 (GESGSGKS) coordinates ATP.

The protein belongs to the ABC transporter superfamily. The complex is composed of two ATP-binding proteins (CntD and CntF), two transmembrane proteins (CntB and CntC) and a solute-binding protein (CntA).

Its subcellular location is the cell membrane. Its function is as follows. Part of the ABC transporter complex CntABCDF (Opp1) involved in the uptake of metal in complex with the metallophore staphylopine (StP). May be involved in the import of a large array of divalent metals ions such as nickel, cobalt, zinc, copper and iron. Probably responsible for energy coupling to the transport system. This chain is Metal-staphylopine import system ATP-binding protein CntF, found in Staphylococcus aureus (strain Mu50 / ATCC 700699).